A 626-amino-acid polypeptide reads, in one-letter code: tRNA 5-methylaminomethyl-2-thiouridine biosynthesis bifunctional protein MnmC (626 aa).

A tRNA (mnm(5)s(2)U34)-methyltransferase region spans residues 1–237 (MKGPQLDYAD…KRDMTVGVFQ (237 aa)). The segment at 255-626 (IGSGLSGANV…RVLPNRFSQE (372 aa)) is FAD-dependent cmnm(5)s(2)U34 oxidoreductase.

In the N-terminal section; belongs to the methyltransferase superfamily. tRNA (mnm(5)s(2)U34)-methyltransferase family. It in the C-terminal section; belongs to the DAO family. It depends on FAD as a cofactor.

The protein resides in the cytoplasm. The catalysed reaction is 5-aminomethyl-2-thiouridine(34) in tRNA + S-adenosyl-L-methionine = 5-methylaminomethyl-2-thiouridine(34) in tRNA + S-adenosyl-L-homocysteine + H(+). Catalyzes the last two steps in the biosynthesis of 5-methylaminomethyl-2-thiouridine (mnm(5)s(2)U) at the wobble position (U34) in tRNA. Catalyzes the FAD-dependent demodification of cmnm(5)s(2)U34 to nm(5)s(2)U34, followed by the transfer of a methyl group from S-adenosyl-L-methionine to nm(5)s(2)U34, to form mnm(5)s(2)U34. The polypeptide is tRNA 5-methylaminomethyl-2-thiouridine biosynthesis bifunctional protein MnmC (Hahella chejuensis (strain KCTC 2396)).